The chain runs to 496 residues: Fatty acyl-CoA reductase 8 (496 aa).

Belongs to the fatty acyl-CoA reductase family.

The enzyme catalyses a long-chain fatty acyl-CoA + 2 NADPH + 2 H(+) = a long-chain primary fatty alcohol + 2 NADP(+) + CoA. Its function is as follows. Catalyzes the reduction of fatty acyl-CoA to fatty alcohols. Catalyzes specifically the formation of C16:0 fatty alcohol. This Arabidopsis thaliana (Mouse-ear cress) protein is Fatty acyl-CoA reductase 8 (FAR8).